Here is a 423-residue protein sequence, read N- to C-terminus: Putative competence-damage inducible protein (423 aa).

Belongs to the CinA family.

The chain is Putative competence-damage inducible protein from Streptococcus thermophilus (strain ATCC BAA-491 / LMD-9).